The sequence spans 184 residues: RNA polymerase sigma factor HrpL (184 aa).

The Polymerase core binding signature appears at 49–62 (DILQCVFLEALRNE). The segment at residues 151–170 (YQETANTLGVPIGTVRSRLS) is a DNA-binding region (H-T-H motif).

The protein belongs to the sigma-70 factor family. ECF subfamily.

Its function is as follows. Sigma factors are initiation factors that promote the attachment of RNA polymerase to specific initiation sites and are then released. This sigma factor is involved in the activation of hprD as well as other hrp loci which are involved in plant pathogenicity, hrmA and avr genes. The chain is RNA polymerase sigma factor HrpL (hrpL) from Pseudomonas syringae pv. syringae.